The chain runs to 134 residues: Profilin-3 (134 aa).

Cysteines 13 and 118 form a disulfide. The Involved in PIP2 interaction motif lies at 84–100 (AVIRGKKGSGGITSKKT). Residue Thr114 is modified to Phosphothreonine.

It belongs to the profilin family. As to quaternary structure, occurs in many kinds of cells as a complex with monomeric actin in a 1:1 ratio. Phosphorylated by MAP kinases.

It localises to the cytoplasm. The protein localises to the cytoskeleton. Functionally, binds to actin and affects the structure of the cytoskeleton. At high concentrations, profilin prevents the polymerization of actin, whereas it enhances it at low concentrations. The polypeptide is Profilin-3 (Olea europaea (Common olive)).